Reading from the N-terminus, the 433-residue chain is Serine--tRNA ligase (433 aa).

L-serine is bound at residue 235–237 (TSE). ATP is bound at residue 266–268 (RSE). Glu289 provides a ligand contact to L-serine. 353–356 (EISS) provides a ligand contact to ATP. Ser388 contacts L-serine.

Belongs to the class-II aminoacyl-tRNA synthetase family. Type-1 seryl-tRNA synthetase subfamily. Homodimer. The tRNA molecule binds across the dimer.

It localises to the cytoplasm. It catalyses the reaction tRNA(Ser) + L-serine + ATP = L-seryl-tRNA(Ser) + AMP + diphosphate + H(+). The enzyme catalyses tRNA(Sec) + L-serine + ATP = L-seryl-tRNA(Sec) + AMP + diphosphate + H(+). It participates in aminoacyl-tRNA biosynthesis; selenocysteinyl-tRNA(Sec) biosynthesis; L-seryl-tRNA(Sec) from L-serine and tRNA(Sec): step 1/1. Its function is as follows. Catalyzes the attachment of serine to tRNA(Ser). Is also able to aminoacylate tRNA(Sec) with serine, to form the misacylated tRNA L-seryl-tRNA(Sec), which will be further converted into selenocysteinyl-tRNA(Sec). The protein is Serine--tRNA ligase of Burkholderia orbicola (strain MC0-3).